A 1567-amino-acid polypeptide reads, in one-letter code: Putative DEAH-box ATP-dependent helicase UM11114 (1567 aa).

Disordered regions lie at residues 1–95 and 670–734; these read MAPR…PGSK and ESSV…ETRR. Residues 10 to 20 show a composition bias toward polar residues; the sequence is IKSSGTTSSKA. 2 stretches are compositionally biased toward low complexity: residues 39 to 48 and 55 to 73; these read TKAAKQQQTQ and AISA…AASS. A compositionally biased stretch (gly residues) spans 74–83; the sequence is AGGGGGGGQG. Polar residues-rich tracts occupy residues 670–687 and 713–726; these read ESSV…TPTG and LQRQ…SPSY. The Helicase ATP-binding domain maps to 746-924; the sequence is LGLIRSNRVV…FGKAPCISIP (179 aa). ATP is bound at residue 759 to 766; sequence GETGCGKT. The short motif at 871 to 874 is the DEAH box element; it reads DEVH. The region spanning 1003–1184 is the Helicase C-terminal domain; sequence VVRYVVERAE…SLFLEVKSMR (182 aa).

This sequence belongs to the DEAD box helicase family. DEAH subfamily.

In Mycosarcoma maydis (Corn smut fungus), this protein is Putative DEAH-box ATP-dependent helicase UM11114.